A 302-amino-acid chain; its full sequence is Glutaminase (302 aa).

Substrate is bound by residues Ser61, Asn111, Glu155, Asn162, Tyr186, Tyr238, and Val256.

It belongs to the glutaminase family. In terms of assembly, homotetramer.

It carries out the reaction L-glutamine + H2O = L-glutamate + NH4(+). This chain is Glutaminase, found in Pseudomonas fluorescens (strain ATCC BAA-477 / NRRL B-23932 / Pf-5).